The sequence spans 509 residues: uncharacterized protein (509 aa).

Disordered stretches follow at residues 112–131, 152–325, 365–457, and 488–509; these read KSKQ…SENE, NKNT…NNDS, NNIN…PNQG, and AQQP…VQQQ. Composition is skewed to low complexity over residues 116 to 127 and 153 to 184; these read NNNGFNGHKGNF and KNTI…SNTT. Residues 189–217 are compositionally biased toward acidic residues; it reads YSDDDYQNEQNEFEEEDYDSNDDENDSHD. Residues 228–242 show a composition bias toward polar residues; sequence KTTNQLKRKVSSSFT. Composition is skewed to low complexity over residues 243-325 and 365-397; these read NNNY…NNDS and NNIN…TNND. Polar residues predominate over residues 398–422; sequence LKSSNHSNYDFNYNTNERLSHSPIQ. The segment covering 423-442 has biased composition (low complexity); it reads THSSSNNSTPSNQSPTFPSN. Composition is skewed to polar residues over residues 443–457 and 496–509; these read YISQ…PNQG and NNNV…VQQQ.

This is an uncharacterized protein from Dictyostelium discoideum (Social amoeba).